A 272-amino-acid polypeptide reads, in one-letter code: HMP-PP phosphatase (272 aa).

Residue Asp8 is the Nucleophile of the active site. 3 residues coordinate Mg(2+): Asp8, Asp10, and Asp212.

This sequence belongs to the HAD-like hydrolase superfamily. Cof family. It depends on Mg(2+) as a cofactor.

The catalysed reaction is 4-amino-2-methyl-5-(diphosphooxymethyl)pyrimidine + H2O = 4-amino-2-methyl-5-(phosphooxymethyl)pyrimidine + phosphate + H(+). In terms of biological role, catalyzes the hydrolysis of 4-amino-2-methyl-5-hydroxymethylpyrimidine pyrophosphate (HMP-PP) to 4-amino-2-methyl-5-hydroxymethylpyrimidine phosphate (HMP-P). The chain is HMP-PP phosphatase from Escherichia coli O8 (strain IAI1).